The sequence spans 440 residues: Acyltransferase Pun1 (440 aa).

Residues histidine 169 and aspartate 384 each act as proton acceptor in the active site.

The protein belongs to the plant acyltransferase family.

It catalyses the reaction vanillylamine + (6E)-8-methylnon-6-enoyl-CoA = capsaicin + CoA + H(+). The catalysed reaction is (6E)-8-methylnon-6-enoyl-CoA + 4-hydroxy-3-methoxy-benzenemethanol = capsiate + CoA. Its function is as follows. Involved in the biosynthesis of capsaicinoids and capsinoids natural products, pungent alkaloids synthesized from phenylpropanoid intermediates in the placental tissue of chili pepper fruit acting as repellant on herbivorous mammals and conferring spiciness to hot peppers. Catalyzes the biosynthesis of capsaicin, a pungent component, and of capsiate, a non-pungent component, from vanillylamine and vanillyl alcohol, respectively. Can transfer an acyl from 8-methylnon-6-enoyl-CoA to vanillylamine forming capsaicin and CoA. The protein is Acyltransferase Pun1 of Capsicum frutescens (Cayenne pepper).